An 861-amino-acid chain; its full sequence is Leucine--tRNA ligase (861 aa).

The 'HIGH' region signature appears at 43–53 (PYPSGKLHMGH). The 'KMSKS' region signature appears at 588–592 (KMSKS). Lys591 contacts ATP.

The protein belongs to the class-I aminoacyl-tRNA synthetase family.

The protein localises to the cytoplasm. It carries out the reaction tRNA(Leu) + L-leucine + ATP = L-leucyl-tRNA(Leu) + AMP + diphosphate. The chain is Leucine--tRNA ligase from Symbiobacterium thermophilum (strain DSM 24528 / JCM 14929 / IAM 14863 / T).